We begin with the raw amino-acid sequence, 1353 residues long: Patatin-like phospholipase domain-containing protein ZK370.4 (1353 aa).

Residues 12-32 form a helical membrane-spanning segment; the sequence is IFLVTFIYNHVLLILFTVCII. A compositionally biased stretch (low complexity) spans 49–64; it reads TPSSASSSATPSSRNS. Disordered stretches follow at residues 49–188 and 199–218; these read TPSS…STAF and SRSYFRQNQENNKDTRVRPP. The segment covering 91 to 123 has biased composition (polar residues); the sequence is SPKSGTPTNTQTIEPPTSLNLNMVNSASGSNLS. Composition is skewed to basic residues over residues 126–138 and 170–184; these read RRMRKRDWAKKLY and PRRRSKHGNSSRRRQ. A nucleoside 3',5'-cyclic phosphate is bound by residues 245–372, 444–581, and 570–692; these read LKML…VITR, FGLV…VLRR, and IYLP…LGQY. The region spanning 942–1108 is the PNPLA domain; sequence LVLGGGGARG…VNNVPADVMR (167 aa). A GXGXXG motif is present at residues 946–951; it reads GGGARG. Positions 973–977 match the GXSXG motif; it reads GTSIG. The active-site Nucleophile is S975. D1095 acts as the Proton acceptor in catalysis. Residues 1095-1097 carry the DGA/G motif; sequence DGG. 3 disordered regions span residues 1230-1249, 1274-1293, and 1305-1353; these read EKETRKFKRQQSRREKPDVS, SMSLNPSANGPVGRAGDHFL, and YEEE…PPSS. Residues 1328–1337 are compositionally biased toward low complexity; sequence GPPSSSSSGG.

It belongs to the NTE family.

The protein localises to the membrane. This is Patatin-like phospholipase domain-containing protein ZK370.4 from Caenorhabditis elegans.